Here is a 150-residue protein sequence, read N- to C-terminus: 3-hydroxyacyl-[acyl-carrier-protein] dehydratase FabZ (150 aa).

His-51 is a catalytic residue.

The protein belongs to the thioester dehydratase family. FabZ subfamily.

The protein resides in the cytoplasm. The enzyme catalyses a (3R)-hydroxyacyl-[ACP] = a (2E)-enoyl-[ACP] + H2O. Its function is as follows. Involved in unsaturated fatty acids biosynthesis. Catalyzes the dehydration of short chain beta-hydroxyacyl-ACPs and long chain saturated and unsaturated beta-hydroxyacyl-ACPs. The chain is 3-hydroxyacyl-[acyl-carrier-protein] dehydratase FabZ from Legionella pneumophila (strain Paris).